The primary structure comprises 260 residues: Acidic leucine-rich nuclear phosphoprotein 32 family member E (260 aa).

Methionine 1 is subject to N-acetylmethionine. 4 LRR repeats span residues 18–38 (EVTELVLDNCLCVNGEIEGLN), 43–64 (ELEFLSMANVELSSLARLPSLN), 65–87 (KLRKLELSDNIISGGLEVLAEKC), and 89–110 (NLTYLNLSGNKIKDLSTVEALQ). A Glycyl lysine isopeptide (Lys-Gly) (interchain with G-Cter in SUMO2) cross-link involves residue lysine 68. Residues 123-161 (CEITNLEDYRESIFELLQQITYLDGFDQEDNEAPDSEEE) form the LRRCT domain. Composition is skewed to acidic residues over residues 149–208 (DQED…EEEV) and 218–240 (IQDEEDDDDYVDEGEEEEEEEEE). The tract at residues 149–260 (DQEDNEAPDS…AEDDGEEDDD (112 aa)) is disordered. The segment at 207 to 260 (EVGLSYLMKDEIQDEEDDDDYVDEGEEEEEEEEEGLRGEKRKRDAEDDGEEDDD) is ZID domain. Basic and acidic residues predominate over residues 241 to 251 (GLRGEKRKRDA).

The protein belongs to the ANP32 family. Component of a SWR1-like complex, composed of EP400, KAT5/TIP60, TRRAP, BRD8, RUVBL1, RUVBL2, ING3 and ANP32E; the complex does not contain SRCAP. Interacts with H2A.Z/H2AZ1. Interacts with the importin alpha KPNA1 and KPNA2. In terms of processing, phosphorylated. The phosphorylation is nuclear localization signal (NLS)-dependent. Expressed at highest levels in cerebellum and spleen. In the cerebellum, expressed mainly in granule cells and, to a lesser extent, in Purkinje cells.

It is found in the cytoplasm. The protein resides in the nucleus. Functionally, histone chaperone that specifically mediates the genome-wide removal of histone H2A.Z/H2AZ1 from the nucleosome: removes H2A.Z/H2AZ1 from its normal sites of deposition, especially from enhancer and insulator regions. Not involved in deposition of H2A.Z/H2AZ1 in the nucleosome. May stabilize the evicted H2A.Z/H2AZ1-H2B dimer, thus shifting the equilibrium towards dissociation and the off-chromatin state. Inhibits activity of protein phosphatase 2A (PP2A). Does not inhibit protein phosphatase 1. May play a role in cerebellar development and synaptogenesis. This Mus musculus (Mouse) protein is Acidic leucine-rich nuclear phosphoprotein 32 family member E (Anp32e).